The following is a 428-amino-acid chain: MASRQTAIPEKLSRKQYKAAMKKEKRKKRRQKMARLRALEAPPEEDDDVSANEELAERLLEIERQRLHEEWLLREEKAQEEFRIKKKKEEAARKQKEEQERQIKAEWEEQQKKQREEEEQKLQEKREREEAVQKMLDQAENERIWQNPEPPKDLRLEKYRPSCPFYNKTGACRFGNRCSRKHDFPTSSPTLLVKSMFTTFGMEQCRRDDYDSDANLEYSEEETYQQFLDFYHDVLPEFKNVGKVIQFKVSCNLEPHLRGNVYVQYQSEEECQAALSLFNGRWYAGRQLQCEFCPVTRWKVAICGLFEMQKCPKGKHCNFLHVFRNPNNEFREANRDIYMSPPAWTGSSGKNSDRRERKDHHEEYYSKSRSYHSGSYHSSKRNRESERKSPHRWKKSHKQTTKSHERHSSRRGREEDSSPGPQSQSHRT.

The disordered stretch occupies residues 1–51 (MASRQTAIPEKLSRKQYKAAMKKEKRKKRRQKMARLRALEAPPEEDDDVSA). The span at 23 to 35 (KEKRKKRRQKMAR) shows a compositional bias: basic residues. The span at 42–51 (PPEEDDDVSA) shows a compositional bias: acidic residues. Serine 50 carries the post-translational modification Phosphoserine. The C3H1-type 1 zinc-finger motif lies at 157 to 185 (EKYRPSCPFYNKTGACRFGNRCSRKHDFP). The RRM domain occupies 189–295 (PTLLVKSMFT…RQLQCEFCPV (107 aa)). The C3H1-type 2 zinc finger occupies 297–324 (RWKVAICGLFEMQKCPKGKHCNFLHVFR). Residues 339-428 (MSPPAWTGSS…PGPQSQSHRT (90 aa)) form a disordered region. At serine 340 the chain carries Phosphoserine. The span at 351 to 366 (NSDRRERKDHHEEYYS) shows a compositional bias: basic and acidic residues. Residues 367–377 (KSRSYHSGSYH) show a composition bias toward low complexity. Serine 375 is modified (phosphoserine). A compositionally biased stretch (basic residues) spans 389–410 (SPHRWKKSHKQTTKSHERHSSR). The span at 419 to 428 (PGPQSQSHRT) shows a compositional bias: polar residues.

As to quaternary structure, interacts with SF3B1. Interacts with ZCRB1. Highest expression levels are detected in the brain, and lower expression levels in other tissues like epididymis, testis, bone marrow or muscle. In testis, expressed in both Sertoli and spermatogenic cell.

Its subcellular location is the nucleus. Plays a role in splicing of the U12-type introns. Implicated also in removal of U2 introns positioned adjacent to a U12 intron. The sequence is that of U2 small nuclear ribonucleoprotein auxiliary factor 35 kDa subunit-related protein 2-like from Mus musculus (Mouse).